Here is a 400-residue protein sequence, read N- to C-terminus: Enoyl-[acyl-carrier-protein] reductase [NADH] (400 aa).

Residues 48–53 (GSSSGY), 74–75 (FE), 111–112 (DA), and 139–140 (LA) each bind NAD(+). Tyrosine 225 lines the substrate pocket. The Proton donor role is filled by tyrosine 235. Residues lysine 244 and 273–275 (VVT) contribute to the NAD(+) site.

It belongs to the TER reductase family. In terms of assembly, monomer.

The catalysed reaction is a 2,3-saturated acyl-[ACP] + NAD(+) = a (2E)-enoyl-[ACP] + NADH + H(+). The protein operates within lipid metabolism; fatty acid biosynthesis. Involved in the final reduction of the elongation cycle of fatty acid synthesis (FAS II). Catalyzes the reduction of a carbon-carbon double bond in an enoyl moiety that is covalently linked to an acyl carrier protein (ACP). The polypeptide is Enoyl-[acyl-carrier-protein] reductase [NADH] (Aliivibrio fischeri (strain MJ11) (Vibrio fischeri)).